The sequence spans 1247 residues: Catenin delta-2 (1247 aa).

Disordered regions lie at residues 1–50, 134–238, and 256–309; these read MFAR…TTSA, SGIL…SAFH, and LPAP…KSYS. Ser-7 is modified (phosphoserine). Polar residues predominate over residues 22–50; sequence PSASEKNSSLSPGLNTSNGDGSETETTSA. Positions 49 to 84 form a coiled coil; that stretch reads SAILASVKEQELQFERLTRELEAERQIVASQLERCK. Residues 149 to 160 show a composition bias toward low complexity; sequence SLLSQSALQLNS. Polar residues predominate over residues 172–207; the sequence is YHSNQTLALGDTAPSQLPARSTQARAAGQSFSQGTT. Arg-209 is subject to Omega-N-methylarginine. Pro residues predominate over residues 218–228; the sequence is PAPPPPPPREP. Residue Arg-261 is modified to Omega-N-methylarginine. Phosphoserine is present on residues Ser-264 and Ser-273. Residues 265–276 show a composition bias toward polar residues; that stretch reads PLTTTQGGSPTK. Omega-N-methylarginine is present on residues Arg-279 and Arg-293. Over residues 296 to 309 the composition is skewed to polar residues; that stretch reads SPKQSPSRLAKSYS. Phosphoserine is present on residues Ser-324, Ser-357, Ser-412, and Ser-458. Residues 391-433 form an ARM 1 repeat; it reads GSRASYSSQHGHLAPELRALQSPEHHIDPIYEDRVYQKPPMRS. The segment at 429-480 is disordered; it reads PPMRSLSQSQGDPLPPAHTGTFRTSTAPSSPGVDSVPLQRTGSQHGPQNAAA. Polar residues predominate over residues 466–475; sequence LQRTGSQHGP. At Ser-511 the chain carries Phosphoserine. Position 513 is a phosphotyrosine (Tyr-513). The tract at residues 514 to 533 is disordered; the sequence is SKSGPALPPEGTLARSPSID. ARM repeat units lie at residues 537–576, 579–618, 623–663, 679–721, 725–770, 832–872, 904–943, and 997–1040; these read KDPR…HLCF, NKIK…NLVY, DDNK…NLSS, LTNA…NVSS, EARR…NLSY, PKGI…NLAA, VYIR…NMAL, and MENA…SMWQ. Disordered stretches follow at residues 1064–1131 and 1152–1176; these read TIER…HTSR and APAE…RKDY. A compositionally biased stretch (polar residues) spans 1072–1081; it reads PYSSSRTPSI. 2 positions are modified to phosphoserine: Ser-1087 and Ser-1098. Residues 1087–1100 show a composition bias toward low complexity; the sequence is SPNNRSASAPASPR. Basic and acidic residues predominate over residues 1103–1112; sequence ISLKERKTDY.

The protein belongs to the beta-catenin family. Binds to E-cadherin at a juxtamembrane site within the cytoplasmic domain. Binds to PSEN1. Interacts with PDZD2. Interacts (via the extreme C-terminus) with FRMPD2 (via the PDZ 2 domain). Interacts with ZBTB33. Interacts with ARHGEF28. Interacts with CDK5. Interacts with CTNNB1. Interacts with GSK3A and GSK3B. Interacts with DNM2. Interacts with CCDC85B. Post-translationally, O-glycosylated. Phosphorylated by CDK5. Phosphorylated by GSK3B. In terms of tissue distribution, expressed in neurons and glial cells. Isoform 2 was found to be the most predominant isoform in various brain regions. Expressed at neuromuscular junctions.

The protein localises to the nucleus. It localises to the cell junction. It is found in the adherens junction. The protein resides in the cell projection. Its subcellular location is the dendrite. The protein localises to the perikaryon. Has a critical role in neuronal development, particularly in the formation and/or maintenance of dendritic spines and synapses. Involved in the regulation of canonical Wnt signaling. It probably acts on beta-catenin turnover, facilitating beta-catenin interaction with GSK3B, phosphorylation, ubiquitination and degradation. May be involved in neuronal cell adhesion and tissue morphogenesis and integrity by regulating adhesion molecules. Functions as a transcriptional activator when bound to ZBTB33. This chain is Catenin delta-2 (Ctnnd2), found in Mus musculus (Mouse).